Consider the following 1800-residue polypeptide: U3 small nucleolar RNA-associated protein 10 (1800 aa).

2 HEAT repeats span residues 426–467 (FTQS…TTPA) and 581–619 (DVDLQALLPFLLVALADSSERVRREAAGVLAAIGSLYKK). The next 2 membrane-spanning stretches (helical) occupy residues 944–964 (IQSGLSYLLSLTLGSLLAIVN) and 1000–1020 (ALLLVAGLSVIAPELVLHSVM). 4 HEAT repeats span residues 1043 to 1081 (DQTIDQVVPALIQSLRNQKRDVVSGTSELLLSFTAAFEH), 1250 to 1288 (TLSLVDFLDTIEVLLQRRNDELRRKVLRLLEGRLRQNPE), 1294 to 1333 (QHRMLDFLPTLVNIIQSSPDILLKHAAVACIDRIAEKYGR), and 1755 to 1793 (LALLPEMLPYISELMEDEDENVEREVRKWVKQIEDVLGE).

Belongs to the HEATR1/UTP10 family. Component of the ribosomal small subunit (SSU) processome.

The protein resides in the nucleus. It is found in the nucleolus. It localises to the membrane. Its function is as follows. Involved in nucleolar processing of pre-18S ribosomal RNA. Involved in ribosome biosynthesis. This chain is U3 small nucleolar RNA-associated protein 10, found in Aspergillus niger (strain ATCC MYA-4892 / CBS 513.88 / FGSC A1513).